The chain runs to 87 residues: Phosphocarrier protein HPr (87 aa).

Positions 2–87 (ASKDFHIVAE…NETMTKEGLA (86 aa)) constitute an HPr domain. His15 acts as the Pros-phosphohistidine intermediate in catalysis. At Ser46 the chain carries Phosphoserine; by HPrK/P.

Belongs to the HPr family.

The protein resides in the cytoplasm. Phosphorylation on Ser-46 inhibits the phosphoryl transfer from enzyme I to HPr. General (non sugar-specific) component of the phosphoenolpyruvate-dependent sugar phosphotransferase system (sugar PTS). This major carbohydrate active-transport system catalyzes the phosphorylation of incoming sugar substrates concomitantly with their translocation across the cell membrane. The phosphoryl group from phosphoenolpyruvate (PEP) is transferred to the phosphoryl carrier protein HPr by enzyme I. Phospho-HPr then transfers it to the PTS EIIA domain. Functionally, P-Ser-HPr interacts with the catabolite control protein A (CcpA), forming a complex that binds to DNA at the catabolite response elements cre, operator sites preceding a large number of catabolite-regulated genes. Thus, P-Ser-HPr is a corepressor in carbon catabolite repression (CCR), a mechanism that allows bacteria to coordinate and optimize the utilization of available carbon sources. P-Ser-HPr also plays a role in inducer exclusion, in which it probably interacts with several non-PTS permeases and inhibits their transport activity. In Streptococcus mutans serotype c (strain ATCC 700610 / UA159), this protein is Phosphocarrier protein HPr (ptsH).